The sequence spans 257 residues: 5-oxoprolinase subunit A (257 aa).

Belongs to the LamB/PxpA family. Forms a complex composed of PxpA, PxpB and PxpC.

The enzyme catalyses 5-oxo-L-proline + ATP + 2 H2O = L-glutamate + ADP + phosphate + H(+). Functionally, catalyzes the cleavage of 5-oxoproline to form L-glutamate coupled to the hydrolysis of ATP to ADP and inorganic phosphate. The chain is 5-oxoprolinase subunit A from Halalkalibacterium halodurans (strain ATCC BAA-125 / DSM 18197 / FERM 7344 / JCM 9153 / C-125) (Bacillus halodurans).